The following is a 93-amino-acid chain: Alpha-defensin 15 (93 aa).

The N-terminal stretch at 1-19 (MKTLVLLSALVLLAFQVQA) is a signal peptide. A propeptide spanning residues 20–58 (DPIQNTDEETKTEEQPGEDDQAVSVSFGDPEGSSLQEES) is cleaved from the precursor. The tract at residues 23–56 (QNTDEETKTEEQPGEDDQAVSVSFGDPEGSSLQE) is disordered. 3 disulfides stabilise this stretch: cysteine 64–cysteine 92, cysteine 66–cysteine 81, and cysteine 71–cysteine 91.

Belongs to the alpha-defensin family. As to expression, paneth cells of the small bowel.

The protein resides in the secreted. Functionally, probably contributes to the antimicrobial barrier function of the small bowel mucosa. The chain is Alpha-defensin 15 (Defa15) from Mus musculus (Mouse).